The chain runs to 185 residues: Large ribosomal subunit protein uL5 (185 aa).

The protein belongs to the universal ribosomal protein uL5 family. As to quaternary structure, part of the 50S ribosomal subunit; part of the 5S rRNA/L5/L18/L25 subcomplex. Contacts the 5S rRNA and the P site tRNA. Forms a bridge to the 30S subunit in the 70S ribosome.

This is one of the proteins that bind and probably mediate the attachment of the 5S RNA into the large ribosomal subunit, where it forms part of the central protuberance. In the 70S ribosome it contacts protein S13 of the 30S subunit (bridge B1b), connecting the 2 subunits; this bridge is implicated in subunit movement. Contacts the P site tRNA; the 5S rRNA and some of its associated proteins might help stabilize positioning of ribosome-bound tRNAs. This chain is Large ribosomal subunit protein uL5, found in Bartonella quintana (strain Toulouse) (Rochalimaea quintana).